The primary structure comprises 285 residues: Heme oxygenase 3, chloroplastic (285 aa).

A chloroplast-targeting transit peptide spans M1–T58. H89 lines the heme b pocket. Over residues H89 to E105 the composition is skewed to basic and acidic residues. The disordered stretch occupies residues H89 to V109.

The protein belongs to the heme oxygenase family. Widely expressed at low levels.

The protein resides in the plastid. Its subcellular location is the chloroplast. It carries out the reaction heme b + 3 reduced [NADPH--hemoprotein reductase] + 3 O2 = biliverdin IXalpha + CO + Fe(2+) + 3 oxidized [NADPH--hemoprotein reductase] + 3 H2O + H(+). Its function is as follows. Catalyzes the opening of the heme ring to form the open-chain tetrapyrrole biliverdin IX with the release of iron and carbon monoxide (CO). Produces specifically the biliverdin IX-alpha isomer. Plays a minor role in phytochrome assembly and photomorphogenesis. This chain is Heme oxygenase 3, chloroplastic (HO3), found in Arabidopsis thaliana (Mouse-ear cress).